Reading from the N-terminus, the 182-residue chain is Small ribosomal subunit protein uS9 (182 aa).

Belongs to the universal ribosomal protein uS9 family.

The protein is Small ribosomal subunit protein uS9 of Corynebacterium glutamicum (strain R).